A 406-amino-acid polypeptide reads, in one-letter code: Vacuole membrane protein 1 (406 aa).

Basic and acidic residues predominate over residues 1–20 (MAENGKNCDQRRIAMSKDQH). Residues 1 to 37 (MAENGKNCDQRRIAMSKDQHNGSLTDPSSVHEKKRRD) form a disordered region. Ala-2 bears the N-acetylalanine mark. Over 2–77 (AENGKNCDQR…WTSKLWHRQS (76 aa)) the chain is Cytoplasmic. A helical membrane pass occupies residues 78–98 (IVVSFLLLLAALVATYYVEGA). Topologically, residues 99 to 109 (HQQYVQRIEKQ) are extracellular. A helical transmembrane segment spans residues 110–130 (FLLYAYWIGLGILSSVGLGTG). At 131 to 250 (LHTFLLYLGP…ASRAKLAVQK (120 aa)) the chain is on the cytoplasmic side. A VTT domain region spans residues 173–316 (GAEGAISLWS…FVIVTFSKHI (144 aa)). Residues 251-271 (LVQKVGFFGILACASIPNPLF) traverse the membrane as a helical segment. Residues 272–273 (DL) are Extracellular-facing. The chain crosses the membrane as a helical span at residues 274–294 (AGITCGHFLVPFWTFFGATLI). At 295-305 (GKAIIKMHIQK) the chain is on the cytoplasmic side. Residues 306-326 (IFVIVTFSKHIVEQMVTFIGA) traverse the membrane as a helical segment. The Extracellular portion of the chain corresponds to 327 to 363 (VPGIGPSLQKPFQEYLEAQRQKLHHRSEAGTPQGENW). A helical transmembrane segment spans residues 364–384 (LSWMFEKLVVAMVCYFVLSII). Over 385–406 (NSMAQNYAKRIQQRLNSEEKTK) the chain is Cytoplasmic.

It belongs to the VMP1 family. Interacts with BECN1. Interacts with TJP1. Interacts with TP53INP2. Interacts with TMEM41B. Interacts with ATP2A2, PLN and SLN; competes with PLN and SLN to prevent them from forming an inhibitory complex with ATP2A2. Interacts with ATG2A.

The protein localises to the endoplasmic reticulum-Golgi intermediate compartment membrane. It is found in the cell membrane. The protein resides in the vacuole membrane. Its subcellular location is the endoplasmic reticulum membrane. It catalyses the reaction a 1,2-diacyl-sn-glycero-3-phospho-L-serine(in) = a 1,2-diacyl-sn-glycero-3-phospho-L-serine(out). The enzyme catalyses cholesterol(in) = cholesterol(out). The catalysed reaction is a 1,2-diacyl-sn-glycero-3-phosphocholine(in) = a 1,2-diacyl-sn-glycero-3-phosphocholine(out). It carries out the reaction a 1,2-diacyl-sn-glycero-3-phosphoethanolamine(in) = a 1,2-diacyl-sn-glycero-3-phosphoethanolamine(out). Functionally, phospholipid scramblase involved in lipid homeostasis and membrane dynamics processes. Has phospholipid scramblase activity toward cholesterol and phosphatidylserine, as well as phosphatidylethanolamine and phosphatidylcholine. Required for autophagosome formation: participates in early stages of autophagosome biogenesis at the endoplasmic reticulum (ER) membrane by reequilibrating the leaflets of the ER as lipids are extracted by ATG2 (ATG2A or ATG2B) to mediate autophagosome assembly. Regulates ATP2A2 activity to control ER-isolation membrane contacts for autophagosome formation. In addition to autophagy, involved in other processes in which phospholipid scramblase activity is required. Modulates ER contacts with lipid droplets, mitochondria and endosomes. Plays an essential role in formation of cell junctions. Upon stress such as bacterial and viral infection, promotes formation of cytoplasmic vacuoles followed by cell death. Involved in the cytoplasmic vacuolization of acinar cells during the early stage of acute pancreatitis. The sequence is that of Vacuole membrane protein 1 from Mus musculus (Mouse).